Here is a 122-residue protein sequence, read N- to C-terminus: Large ribosomal subunit protein uL18 (122 aa).

The protein belongs to the universal ribosomal protein uL18 family. As to quaternary structure, part of the 50S ribosomal subunit; part of the 5S rRNA/L5/L18/L25 subcomplex. Contacts the 5S and 23S rRNAs.

Functionally, this is one of the proteins that bind and probably mediate the attachment of the 5S RNA into the large ribosomal subunit, where it forms part of the central protuberance. The polypeptide is Large ribosomal subunit protein uL18 (Leptospira interrogans serogroup Icterohaemorrhagiae serovar copenhageni (strain Fiocruz L1-130)).